Consider the following 775-residue polypeptide: Venom dipeptidyl peptidase 4 (775 aa).

Positions 1 to 23 (MEVLVQLALLLVVHGSLVVLVAG) are cleaved as a signal peptide. 2 N-linked (GlcNAc...) asparagine glycosylation sites follow: Asn68 and Asn239. 2 disulfides stabilise this stretch: Cys450–Cys453 and Cys463–Cys481. N-linked (GlcNAc...) asparagine glycosylation is found at Asn473, Asn505, Asn578, and Asn631. Catalysis depends on Ser639, which acts as the Charge relay system. The cysteines at positions 659 and 770 are disulfide-linked. 2 N-linked (GlcNAc...) asparagine glycosylation sites follow: Asn689 and Asn694. Residues Asp718 and His750 each act as charge relay system in the active site.

This sequence belongs to the peptidase S9B family. DPPIV subfamily. In terms of tissue distribution, expressed by the venom duct.

The protein resides in the secreted. It catalyses the reaction Release of an N-terminal dipeptide, Xaa-Yaa-|-Zaa-, from a polypeptide, preferentially when Yaa is Pro, provided Zaa is neither Pro nor hydroxyproline.. Inhibited by diprotin A. Venom dipeptidyl-peptidase which removes N-terminal dipeptides sequentially from polypeptides having unsubstituted N-termini provided that the penultimate residue is proline. May process promelittin into its active form and/or modulate the chemotactic activity of immune cells after the insect sting. The sequence is that of Venom dipeptidyl peptidase 4 from Apis mellifera (Honeybee).